Here is a 345-residue protein sequence, read N- to C-terminus: Dihydroorotase (345 aa).

2 residues coordinate Zn(2+): histidine 13 and histidine 15. Residues 15–17 (HLR) and asparagine 41 each bind substrate. The Zn(2+) site is built by lysine 100, histidine 137, and histidine 175. Residue lysine 100 is modified to N6-carboxylysine. Histidine 137 provides a ligand contact to substrate. Leucine 220 contacts substrate. Residue aspartate 248 coordinates Zn(2+). Aspartate 248 is a catalytic residue. Positions 252 and 264 each coordinate substrate.

It belongs to the metallo-dependent hydrolases superfamily. DHOase family. Class II DHOase subfamily. Homodimer. Zn(2+) serves as cofactor.

It carries out the reaction (S)-dihydroorotate + H2O = N-carbamoyl-L-aspartate + H(+). Its pathway is pyrimidine metabolism; UMP biosynthesis via de novo pathway; (S)-dihydroorotate from bicarbonate: step 3/3. Catalyzes the reversible cyclization of carbamoyl aspartate to dihydroorotate. This chain is Dihydroorotase, found in Laribacter hongkongensis (strain HLHK9).